The sequence spans 498 residues: Glutamate--tRNA ligase (498 aa).

Residues 10 to 20 (PSPTGYFHIGG) carry the 'HIGH' region motif. The 'KMSKS' region motif lies at 252–256 (KLSKR). Residue lysine 255 coordinates ATP.

This sequence belongs to the class-I aminoacyl-tRNA synthetase family. Glutamate--tRNA ligase type 1 subfamily. As to quaternary structure, monomer.

The protein localises to the cytoplasm. The catalysed reaction is tRNA(Glu) + L-glutamate + ATP = L-glutamyl-tRNA(Glu) + AMP + diphosphate. Catalyzes the attachment of glutamate to tRNA(Glu) in a two-step reaction: glutamate is first activated by ATP to form Glu-AMP and then transferred to the acceptor end of tRNA(Glu). This Mycoplasmoides gallisepticum (strain R(low / passage 15 / clone 2)) (Mycoplasma gallisepticum) protein is Glutamate--tRNA ligase.